Reading from the N-terminus, the 474-residue chain is Aspartyl/glutamyl-tRNA(Asn/Gln) amidotransferase subunit B (474 aa).

Belongs to the GatB/GatE family. GatB subfamily. As to quaternary structure, heterotrimer of A, B and C subunits.

It carries out the reaction L-glutamyl-tRNA(Gln) + L-glutamine + ATP + H2O = L-glutaminyl-tRNA(Gln) + L-glutamate + ADP + phosphate + H(+). The enzyme catalyses L-aspartyl-tRNA(Asn) + L-glutamine + ATP + H2O = L-asparaginyl-tRNA(Asn) + L-glutamate + ADP + phosphate + 2 H(+). Functionally, allows the formation of correctly charged Asn-tRNA(Asn) or Gln-tRNA(Gln) through the transamidation of misacylated Asp-tRNA(Asn) or Glu-tRNA(Gln) in organisms which lack either or both of asparaginyl-tRNA or glutaminyl-tRNA synthetases. The reaction takes place in the presence of glutamine and ATP through an activated phospho-Asp-tRNA(Asn) or phospho-Glu-tRNA(Gln). The sequence is that of Aspartyl/glutamyl-tRNA(Asn/Gln) amidotransferase subunit B from Limosilactobacillus fermentum (strain NBRC 3956 / LMG 18251) (Lactobacillus fermentum).